A 325-amino-acid chain; its full sequence is Tartrate-resistant acid phosphatase type 5 (325 aa).

Residues 1–21 (MDMWTALLILQALLLPSLADG) form the signal peptide. Fe cation contacts are provided by D33, D71, Y74, and N110. N116 and N147 each carry an N-linked (GlcNAc...) asparagine glycan. The cysteines at positions 161 and 219 are disulfide-linked. The Fe cation site is built by H205, H240, and H242.

This sequence belongs to the metallophosphoesterase superfamily. Purple acid phosphatase family. As to quaternary structure, exists either as monomer or, after proteolytic processing, as a dimer of two chains linked by disulfide bond(s). It depends on Fe cation as a cofactor.

It localises to the lysosome. It carries out the reaction a phosphate monoester + H2O = an alcohol + phosphate. Involved in osteopontin/bone sialoprotein dephosphorylation. Its expression seems to increase in certain pathological states such as Gaucher and Hodgkin diseases, the hairy cell, the B-cell, and the T-cell leukemias. The polypeptide is Tartrate-resistant acid phosphatase type 5 (ACP5) (Homo sapiens (Human)).